Consider the following 601-residue polypeptide: Probable translation initiation factor IF-2 (601 aa).

Residues 14-229 (LRTPIVAVLG…VMMGLSQRYM (216 aa)) enclose the tr-type G domain. Residues 23–30 (GHVDHGKT) are G1. Residue 23–30 (GHVDHGKT) participates in GTP binding. The tract at residues 48–52 (AITQH) is G2. The interval 85-88 (DTPG) is G3. GTP is bound by residues 85 to 89 (DTPGH) and 139 to 142 (NKID). The tract at residues 139-142 (NKID) is G4. The tract at residues 207-209 (SAE) is G5.

It belongs to the TRAFAC class translation factor GTPase superfamily. Classic translation factor GTPase family. IF-2 subfamily.

Functionally, function in general translation initiation by promoting the binding of the formylmethionine-tRNA to ribosomes. Seems to function along with eIF-2. The chain is Probable translation initiation factor IF-2 from Haloarcula marismortui (strain ATCC 43049 / DSM 3752 / JCM 8966 / VKM B-1809) (Halobacterium marismortui).